The following is an 867-amino-acid chain: Coiled-coil domain-containing protein 178 (867 aa).

4 coiled-coil regions span residues 153–204, 233–414, 445–470, and 662–696; these read DEKC…KIDS, WHLE…ENQY, ACTKLTEDNKKLEIDINKITVKTNES, and MIFYAKINELNEELKAKEEEKKSFDQTLEILKNKF.

The polypeptide is Coiled-coil domain-containing protein 178 (CCDC178) (Homo sapiens (Human)).